The sequence spans 489 residues: N-succinylglutamate 5-semialdehyde dehydrogenase (489 aa).

224–229 is a binding site for NAD(+); sequence GSAKVG. Active-site residues include E247 and C281.

Belongs to the aldehyde dehydrogenase family. AstD subfamily.

It carries out the reaction N-succinyl-L-glutamate 5-semialdehyde + NAD(+) + H2O = N-succinyl-L-glutamate + NADH + 2 H(+). It functions in the pathway amino-acid degradation; L-arginine degradation via AST pathway; L-glutamate and succinate from L-arginine: step 4/5. Its function is as follows. Catalyzes the NAD-dependent reduction of succinylglutamate semialdehyde into succinylglutamate. In Chromohalobacter salexigens (strain ATCC BAA-138 / DSM 3043 / CIP 106854 / NCIMB 13768 / 1H11), this protein is N-succinylglutamate 5-semialdehyde dehydrogenase.